We begin with the raw amino-acid sequence, 1654 residues long: Outer membrane protein B (1654 aa).

Residues 1334-1361 (GALRYLGTPETAEMAGPEAGAISAAVAA) constitute a propeptide that is removed on maturation. Positions 1366–1654 (IDNVAYGIWA…QGTLKVRVNF (289 aa)) constitute an Autotransporter domain.

Belongs to the rickettsiae OmpA/OmpB family. In terms of processing, the N-terminus is blocked.

The protein localises to the periplasm. It localises to the secreted. It is found in the cell surface. The protein resides in the cell outer membrane. In terms of biological role, the 120 kDa surface-exposed protein is a major structural protein which may play a role as a rickettsial virulence factor and/or immunogen during infection. The 32 kDa beta peptide may serve as a membrane anchor. This chain is Outer membrane protein B (ompB), found in Rickettsia rickettsii.